Here is a 445-residue protein sequence, read N- to C-terminus: MDRLHIIGAGLAGSEAAWQAAQAGVPVVLHEMRPRVGTFAHRSGDFAEMVCSNSFRSDDDERNAVGLLHWEMRAAGGLIMATADRHALPAGGALAVDREAFSGAVTAALRAHPLISVAEEEITELPAEGHWIIATGPLTSGALAESIRAVTGAESLAFFDAIAPIVHAETTDIRCLRQSRYDKGETEEERTAYINCPMTRDQYEAFIDALLAAEKTEFHAGETAGYFDGCLPIEVMAERGRETLRHGPMKPVGLTNAHDPATKAYAVVQLRRDNALGTLYNIVGFQTKMKYGAQTAVFKMIPGLEQASFARLGGIHRNTFLNSPTLLDDQMRLRARPNLRFAGQVTGVEGYVESAAMGLLAGRMAAAGILGRSLPPPGPETAMGALVNHITGGAVAKTFQPMNVNFGLFPPLDDARGGRRGRKDRYKGYTDRAKEVFTAWLAAQA.

Residue 8-13 (GAGLAG) participates in FAD binding.

Belongs to the MnmG family. TrmFO subfamily. Requires FAD as cofactor.

The protein localises to the cytoplasm. It catalyses the reaction uridine(54) in tRNA + (6R)-5,10-methylene-5,6,7,8-tetrahydrofolate + NADH + H(+) = 5-methyluridine(54) in tRNA + (6S)-5,6,7,8-tetrahydrofolate + NAD(+). It carries out the reaction uridine(54) in tRNA + (6R)-5,10-methylene-5,6,7,8-tetrahydrofolate + NADPH + H(+) = 5-methyluridine(54) in tRNA + (6S)-5,6,7,8-tetrahydrofolate + NADP(+). Catalyzes the folate-dependent formation of 5-methyl-uridine at position 54 (M-5-U54) in all tRNAs. The protein is Methylenetetrahydrofolate--tRNA-(uracil-5-)-methyltransferase TrmFO of Rhodobacter capsulatus (strain ATCC BAA-309 / NBRC 16581 / SB1003).